Reading from the N-terminus, the 414-residue chain is STAGA complex 65 subunit gamma (414 aa).

The segment at 87 to 108 (NQQQTEGVKTEESEPLPSCPGS) is disordered. At S108 the chain carries Phosphoserine. A Glycyl lysine isopeptide (Lys-Gly) (interchain with G-Cter in SUMO2) cross-link involves residue K271. 2 positions are modified to phosphoserine: S323 and S334. Residues 346-414 (PQESEEGNVS…QRCKKRMRKI (69 aa)) form a disordered region. Over residues 386 to 395 (SSYGSHSTDS) the composition is skewed to low complexity.

In terms of assembly, component of the STAGA transcription coactivator-HAT complex, at least composed of SUPT3H, SUPT7L, GCN5L2, TAF5L, TAF6L, TADA3L, TAD1L, TAF10, TAF12 and TAF9. Post-translationally, sumoylated. Expressed at high levels in adenocarcinomas and gliomas and low in esophageal cancers and malignant hematological disease. Also expressed at high level in the thymus, low in peripheral blood mononuclear cells, and lowest in the stomach, small intestine, and skeletal muscle.

It localises to the nucleus. This chain is STAGA complex 65 subunit gamma (SUPT7L), found in Homo sapiens (Human).